Reading from the N-terminus, the 333-residue chain is Small ribosomal subunit protein uS2 (333 aa).

Belongs to the universal ribosomal protein uS2 family.

In Azorhizobium caulinodans (strain ATCC 43989 / DSM 5975 / JCM 20966 / LMG 6465 / NBRC 14845 / NCIMB 13405 / ORS 571), this protein is Small ribosomal subunit protein uS2.